We begin with the raw amino-acid sequence, 352 residues long: Long-chain-alcohol O-fatty-acyltransferase (352 aa).

The next 8 membrane-spanning stretches (helical) occupy residues 13 to 33 (VWIS…VAPH), 34 to 54 (GGAL…FLPL), 67 to 87 (LYLV…LGPL), 128 to 148 (KVVL…IYEF), 155 to 175 (FVIS…TLAA), 239 to 259 (VAGA…VFFF), 267 to 287 (SWEV…EMVV), and 303 to 323 (GALT…PQLV).

The protein belongs to the wax synthase family.

It localises to the microsome membrane. It catalyses the reaction a long chain fatty alcohol + a fatty acyl-CoA = a wax ester + CoA. Functionally, catalyzes the final step in the synthesis of long-chain linear esters (waxes). Has activity with both saturated and monounsaturated acyl-CoA ranging from 14 to 24 carbons in length, but C20:1 acyl-CoA is the preferred substrate. This is Long-chain-alcohol O-fatty-acyltransferase from Simmondsia chinensis (Jojoba).